Consider the following 119-residue polypeptide: Urotensin-2B (119 aa).

Positions 1 to 28 (MNKILSSTVCFGLLTLLSVLSFLQSVHG) are cleaved as a signal peptide. Residues 29–109 (RPYLTQGNEI…VDGLFSSHPS (81 aa)) constitute a propeptide that is removed on maturation. The cysteines at positions 113 and 118 are disulfide-linked.

The protein belongs to the urotensin-2 family.

The protein resides in the secreted. Its function is as follows. Potent vasoconstrictor. The polypeptide is Urotensin-2B (UTS2B) (Homo sapiens (Human)).